The primary structure comprises 170 residues: Adenine phosphoribosyltransferase (170 aa).

This sequence belongs to the purine/pyrimidine phosphoribosyltransferase family. As to quaternary structure, homodimer.

Its subcellular location is the cytoplasm. It carries out the reaction AMP + diphosphate = 5-phospho-alpha-D-ribose 1-diphosphate + adenine. Its pathway is purine metabolism; AMP biosynthesis via salvage pathway; AMP from adenine: step 1/1. In terms of biological role, catalyzes a salvage reaction resulting in the formation of AMP, that is energically less costly than de novo synthesis. This is Adenine phosphoribosyltransferase from Thermotoga neapolitana (strain ATCC 49049 / DSM 4359 / NBRC 107923 / NS-E).